Reading from the N-terminus, the 287-residue chain is Pyridoxal 5'-phosphate synthase subunit PdxS (287 aa).

Asp21 contacts D-ribose 5-phosphate. Residue Lys78 is the Schiff-base intermediate with D-ribose 5-phosphate of the active site. Gly150 is a D-ribose 5-phosphate binding site. Arg162 lines the D-glyceraldehyde 3-phosphate pocket. D-ribose 5-phosphate-binding positions include Gly211 and 232 to 233 (GS).

This sequence belongs to the PdxS/SNZ family. In terms of assembly, in the presence of PdxT, forms a dodecamer of heterodimers.

The enzyme catalyses aldehydo-D-ribose 5-phosphate + D-glyceraldehyde 3-phosphate + L-glutamine = pyridoxal 5'-phosphate + L-glutamate + phosphate + 3 H2O + H(+). The protein operates within cofactor biosynthesis; pyridoxal 5'-phosphate biosynthesis. Catalyzes the formation of pyridoxal 5'-phosphate from ribose 5-phosphate (RBP), glyceraldehyde 3-phosphate (G3P) and ammonia. The ammonia is provided by the PdxT subunit. Can also use ribulose 5-phosphate and dihydroxyacetone phosphate as substrates, resulting from enzyme-catalyzed isomerization of RBP and G3P, respectively. The polypeptide is Pyridoxal 5'-phosphate synthase subunit PdxS (Francisella tularensis subsp. tularensis (strain FSC 198)).